The sequence spans 155 residues: 6,7-dimethyl-8-ribityllumazine synthase (155 aa).

5-amino-6-(D-ribitylamino)uracil-binding positions include W18, 52-54 (AFE), and 76-78 (LVV). Catalysis depends on R84, which acts as the Proton donor. Residue S109 coordinates 5-amino-6-(D-ribitylamino)uracil. H123 lines the (2S)-2-hydroxy-3-oxobutyl phosphate pocket.

It belongs to the DMRL synthase family.

It catalyses the reaction (2S)-2-hydroxy-3-oxobutyl phosphate + 5-amino-6-(D-ribitylamino)uracil = 6,7-dimethyl-8-(1-D-ribityl)lumazine + phosphate + 2 H2O + H(+). It participates in cofactor biosynthesis; riboflavin biosynthesis; riboflavin from 2-hydroxy-3-oxobutyl phosphate and 5-amino-6-(D-ribitylamino)uracil: step 1/2. In terms of biological role, catalyzes the formation of 6,7-dimethyl-8-ribityllumazine by condensation of 5-amino-6-(D-ribitylamino)uracil with 3,4-dihydroxy-2-butanone 4-phosphate. This is the penultimate step in the biosynthesis of riboflavin. The sequence is that of 6,7-dimethyl-8-ribityllumazine synthase from Rhodococcus erythropolis (Arthrobacter picolinophilus).